We begin with the raw amino-acid sequence, 287 residues long: Melatonin receptor type 1B-A (287 aa).

Over 1–28 (MPENVSLIRNRTEVGQGRAWGSGAGARP) the chain is Extracellular. N-linked (GlcNAc...) asparagine glycans are attached at residues N4 and N10. Residues 29 to 49 (AWVVMVLAGVLIFTSVVDVLG) traverse the membrane as a helical segment. Residues 50–69 (NVLVIISVLRNRKLRNAGNA) are Cytoplasmic-facing. The helical transmembrane segment at 70 to 90 (FVVSLAFADLLVVCYPYPLVL) threads the bilayer. Over 91–107 (HAMLHAGWLPGEMECKV) the chain is Extracellular. C105 and C182 are joined by a disulfide. A helical transmembrane segment spans residues 108 to 128 (SGFLMGASVIGSIFNITAIAI). Residues 129–149 (NRYCFICQANTYEKIYGRAGT) are Cytoplasmic-facing. The chain crosses the membrane as a helical span at residues 150 to 170 (LVLLTLVWVLTAIAILPNLSL). Over 171–192 (GSLTYDPRVYSCTFSQTTSAGY) the chain is Extracellular. Residues 193-213 (TIAVVTVHFLLPIAVVTFCYL) form a helical membrane-spanning segment. The Cytoplasmic portion of the chain corresponds to 214 to 245 (RIWVLVLRVRRRVTTDVRPRLRPSELRHFLTM). A helical transmembrane segment spans residues 246-266 (FVVFVLFAVCWAPLNLIGLAV). Topologically, residues 267 to 275 (AVDPPRVGP) are extracellular. The helical transmembrane segment at 276-287 (LVPDWLFVMSYF) threads the bilayer.

This sequence belongs to the G-protein coupled receptor 1 family.

The protein localises to the cell membrane. Functionally, high affinity receptor for melatonin. The activity of this receptor is mediated by pertussis toxin sensitive G proteins that inhibits adenylate cyclase activity. The sequence is that of Melatonin receptor type 1B-A (mtnr1ba) from Danio rerio (Zebrafish).